The sequence spans 396 residues: MSEYSIFTSESVSEGHPDKIADQISDAVLDAIIAEDKHARVACETLVKTGVAIVAGEVTTSAWVDLEQLVRDVIVDIGYNSSEVGFDGATCGIINIIGKQSVDIAQGVDRTKPEDQGAGDQGLMFGYASNETDVLMPAPIRFSHALVERQAEARKNGLLPWLRPDAKSQVTCRYENGQVVGIDAVVLSTQHNPDVKQSDLREAVMELIIKHSLPAELLHKDTQYHINPTGQFVIGGPVGDCGLTGRKIIVDTYGGMARHGGGAFSGKDPSKVDRSAAYAGRYVAKNIVAAGLADRCEIQVSYAIGVAQPTSISLNTFGTGKLGDDKIIALVREHFDLRPYAITRMLDLLHPMYRATAAYGHFGRTPYEMTVGADTFTAFTWEKTDKADALRAAAGL.

His16 lines the ATP pocket. Asp18 contributes to the Mg(2+) binding site. Glu44 provides a ligand contact to K(+). Positions 57 and 100 each coordinate L-methionine. Residues 100–110 (QSVDIAQGVDR) form a flexible loop region. ATP is bound by residues 165–167 (DAK), Asp240, 246–247 (RK), Ala263, and Lys267. Asp240 is an L-methionine binding site. Residue Lys271 coordinates L-methionine.

The protein belongs to the AdoMet synthase family. Homotetramer; dimer of dimers. It depends on Mg(2+) as a cofactor. Requires K(+) as cofactor.

It is found in the cytoplasm. The enzyme catalyses L-methionine + ATP + H2O = S-adenosyl-L-methionine + phosphate + diphosphate. It functions in the pathway amino-acid biosynthesis; S-adenosyl-L-methionine biosynthesis; S-adenosyl-L-methionine from L-methionine: step 1/1. In terms of biological role, catalyzes the formation of S-adenosylmethionine (AdoMet) from methionine and ATP. The overall synthetic reaction is composed of two sequential steps, AdoMet formation and the subsequent tripolyphosphate hydrolysis which occurs prior to release of AdoMet from the enzyme. The sequence is that of S-adenosylmethionine synthase from Stutzerimonas stutzeri (strain A1501) (Pseudomonas stutzeri).